The following is a 151-amino-acid chain: Transcriptional regulator MraZ (151 aa).

SpoVT-AbrB domains follow at residues 5-52 and 81-124; these read ANAI…PLDE and AVDL…DEDA.

It belongs to the MraZ family. Forms oligomers.

The protein resides in the cytoplasm. It is found in the nucleoid. This is Transcriptional regulator MraZ from Pseudomonas fluorescens (strain SBW25).